The chain runs to 288 residues: Elongation factor Ts (288 aa).

The involved in Mg(2+) ion dislocation from EF-Tu stretch occupies residues 82 to 85 (TDFV).

The protein belongs to the EF-Ts family.

The protein localises to the cytoplasm. In terms of biological role, associates with the EF-Tu.GDP complex and induces the exchange of GDP to GTP. It remains bound to the aminoacyl-tRNA.EF-Tu.GTP complex up to the GTP hydrolysis stage on the ribosome. In Prosthecochloris aestuarii (strain DSM 271 / SK 413), this protein is Elongation factor Ts.